The following is a 315-amino-acid chain: MPRIAYLGPQGTFTESALLQMISGAMVPGGDADDTAVTPVPTDSTPAGLEAVRSGAADYACVPIENSIEGSVLPTLDSLAVGAPLQIFAELTLAVSFSIVVRPDHDGDVGTVAAFPVAAAQVRRWLAEHLPAAQLVPAHSNAAAAADVAGGRADAGISTALAAERYGLRSLAAGVVDEPNARTRFVLVGRPAPPPARTGADRTSVALRLPNTPGALVAAMTELSIRDIDLTRIESRPTRTELGTYVFFLDCVGHLEDDAVAEALKALHRRCEDVRYLGSWPTGTAAGAPPPSSDEATRWLTRLREGLPTPPEGGR.

In terms of domain architecture, Prephenate dehydratase spans 3 to 190 (RIAYLGPQGT…ARTRFVLVGR (188 aa)). Positions 204 to 281 (SVALRLPNTP…EDVRYLGSWP (78 aa)) constitute an ACT domain.

Homodimer.

The enzyme catalyses prephenate + H(+) = 3-phenylpyruvate + CO2 + H2O. It functions in the pathway amino-acid biosynthesis; L-phenylalanine biosynthesis; phenylpyruvate from prephenate: step 1/1. This Mycobacterium sp. (strain KMS) protein is Prephenate dehydratase (pheA).